Consider the following 65-residue polypeptide: Large ribosomal subunit protein bL35 (65 aa).

The interval 1–26 is disordered; that stretch reads MPKIKTVRGAAKRFKKTASGGFKRKQ. Over residues 10 to 26 the composition is skewed to basic residues; sequence AAKRFKKTASGGFKRKQ.

It belongs to the bacterial ribosomal protein bL35 family.

The polypeptide is Large ribosomal subunit protein bL35 (Mannheimia succiniciproducens (strain KCTC 0769BP / MBEL55E)).